Here is a 233-residue protein sequence, read N- to C-terminus: H-2 class II histocompatibility antigen, A-F alpha chain (233 aa).

Residues 1–88 (EDDIEADHVG…KRSNFTPATN (88 aa)) are alpha-1. Topologically, residues 1-195 (EDDIEADHVG…IPAPMSELTE (195 aa)) are extracellular. An alpha-2 region spans residues 89–182 (EAPQATVFPK…GLEEPVLKHW (94 aa)). The region spanning 91-183 (PQATVFPKSP…LEEPVLKHWE (93 aa)) is the Ig-like C1-type domain. Cys111 and Cys167 are joined by a disulfide. Asn122 is a glycosylation site (N-linked (GlcNAc...) asparagine). The interval 183 to 195 (EPEIPAPMSELTE) is connecting peptide. The chain crosses the membrane as a helical span at residues 196 to 221 (TVVCALGLSVGLVGIVVGTIFIIQGL). The Cytoplasmic segment spans residues 222–233 (RSGGTSRHPGPL).

Belongs to the MHC class II family.

It localises to the membrane. The sequence is that of H-2 class II histocompatibility antigen, A-F alpha chain (H2-Aa) from Mus musculus (Mouse).